The sequence spans 434 residues: Purple acid phosphatase 22 (434 aa).

The first 22 residues, 1-22, serve as a signal peptide directing secretion; that stretch reads MKLFGLFLSFTLLFLCPFISQA. N116 is a glycosylation site (N-linked (GlcNAc...) asparagine). 3 residues coordinate Fe cation: D148, D175, and Y178. Zn(2+) is bound at residue D175. Positions 208 and 292 each coordinate Zn(2+). N208 serves as a coordination point for substrate. H302 acts as the Proton donor in catalysis. H329 is a Zn(2+) binding site. A substrate-binding site is contributed by 329–331; that stretch reads HVH. H331 provides a ligand contact to Fe cation. N403 carries N-linked (GlcNAc...) asparagine glycosylation.

This sequence belongs to the metallophosphoesterase superfamily. Purple acid phosphatase family. In terms of assembly, homodimer. It depends on Fe cation as a cofactor. Requires Zn(2+) as cofactor. In terms of tissue distribution, expressed in roots, stems, leaves, flowers and siliques.

The protein resides in the secreted. It carries out the reaction a phosphate monoester + H2O = an alcohol + phosphate. This is Purple acid phosphatase 22 (PAP22) from Arabidopsis thaliana (Mouse-ear cress).